Consider the following 1163-residue polypeptide: Leptin receptor (1163 aa).

An N-terminal signal peptide occupies residues 1–21 (MICQKFCVVLLHWEFICVITA). Over 22 to 837 (FNLSYPITPW…QDNTEKHQND (816 aa)) the chain is Extracellular. N-linked (GlcNAc...) asparagine glycans are attached at residues Asn-23, Asn-41, Asn-56, Asn-71, Asn-79, Asn-96, and Asn-114. 2 cysteine pairs are disulfide-bonded: Cys-37/Cys-88 and Cys-87/Cys-97. Intrachain disulfides connect Cys-129/Cys-140 and Cys-184/Cys-194. Asn-185, Asn-204, Asn-274, Asn-345, and Asn-395 each carry an N-linked (GlcNAc...) asparagine glycan. In terms of domain architecture, Fibronectin type-III 1 spans 237–331 (PPLGLRMEIT…TPHVFTTQDV (95 aa)). 2 disulfide bridges follow: Cys-350-Cys-410 and Cys-411-Cys-416. N-linked (GlcNAc...) asparagine glycosylation is present at Asn-431. Intrachain disulfides connect Cys-434/Cys-445, Cys-471/Cys-526, and Cys-486/Cys-496. Residues 465–482 (RRSSLYCFDIPSIHPISK) form a leptin-binding region. 3 consecutive Fibronectin type-III domains span residues 537–632 (PPSS…TVVM), 637–730 (PMRG…LTFS), and 738–831 (IVQS…QDNT). The short motif at 620 to 624 (WSNWS) is the WSXWS motif element. N-linked (GlcNAc...) asparagine glycans are attached at residues Asn-622, Asn-657, Asn-668, Asn-686, Asn-695, Asn-726, and Asn-748. A helical membrane pass occupies residues 838–860 (AGLYVIVPVIISSSILLLGTLLI). The Cytoplasmic segment spans residues 861-1163 (LHQRMKKLFW…MENKMCDLTV (303 aa)). Residues 869–877 (FWEDVPNPK) carry the Box 1 motif motif. Ser-880 bears the Phosphoserine mark. Residues 891 to 896 (ETFEHL) form a required for JAK2 activation region. A required for STAT3 phosphorylation region spans residues 896 to 904 (LFIKHTASV). Tyr-984 is modified (phosphotyrosine; by JAK2). Tyr-1077 bears the Phosphotyrosine mark. Position 1139 is a phosphotyrosine; by JAK2 (Tyr-1139).

It belongs to the type I cytokine receptor family. Type 2 subfamily. Present as a mixture of monomers and dimers. The phosphorylated receptor binds a number of SH2 domain-containing proteins such as JAK2, STAT3, PTPN11, and SOCS3. Interaction with SOCS3 inhibits JAK/STAT signaling and MAPK cascade. On ligand binding, phosphorylated on two conserved C-terminal tyrosine residues (isoform B only) by JAK2. Tyr-984 is required for complete binding and activation of PTPN11, ERK/FOS activation and, for interaction with SOCS3. Phosphorylation on Tyr-1139 is required for STAT3 binding/activation. In terms of processing, on ligand binding, phosphorylated on two conserved C-terminal tyrosine residues (isoform B only) by JAK2. Tyr-984 is required for complete binding and activation of PTPN11, ERK/FOS activation,for interaction with SOCS3 and SOCS3 mediated inhibition of leptin signaling. Phosphorylation on Tyr-1139 is required for STAT3 binding/activation. Phosphorylation of Tyr-1077 has a more accessory role. Widely expressed. High expression of isoform B in liver, adipose tissue, hypothalamus and choroid plexus.

The protein resides in the cell membrane. The protein localises to the basolateral cell membrane. Its function is as follows. Receptor for hormone LEP/leptin. On ligand binding, mediates LEP central and peripheral effects through the activation of different signaling pathways such as JAK2/STAT3 and MAPK cascade/FOS. In the hypothalamus, LEP acts as an appetite-regulating factor that induces a decrease in food intake and an increase in energy consumption by inducing anorexinogenic factors and suppressing orexigenic neuropeptides, also regulates bone mass and secretion of hypothalamo-pituitary-adrenal hormones. In the periphery, increases basal metabolism, influences reproductive function, regulates pancreatic beta-cell function and insulin secretion, is pro-angiogenic and affects innate and adaptive immunity. Control of energy homeostasis and melanocortin production (stimulation of POMC and full repression of AgRP transcription) is mediated by STAT3 signaling, whereas distinct signals regulate NPY and the control of fertility, growth and glucose homeostasis. Involved in the regulation of counter-regulatory response to hypoglycemia by inhibiting neurons of the parabrachial nucleus. Has a specific effect on T lymphocyte responses, differentially regulating the proliferation of naive and memory T-cells. Leptin increases Th1 and suppresses Th2 cytokine production. Functionally, may transport LEP across the blood-brain barrier. Binds LEP and mediates LEP endocytosis. Does not induce phosphorylation of and activate STAT3. The chain is Leptin receptor (LEPR) from Macaca mulatta (Rhesus macaque).